The chain runs to 331 residues: Probable tRNA pseudouridine synthase B (331 aa).

Aspartate 66 functions as the Nucleophile in the catalytic mechanism. Residues 233–307 (INKIIVKDSA…NEEDNREKYK (75 aa)) form the PUA domain.

The protein belongs to the pseudouridine synthase TruB family. Type 2 subfamily.

The enzyme catalyses uridine(55) in tRNA = pseudouridine(55) in tRNA. Could be responsible for synthesis of pseudouridine from uracil-55 in the psi GC loop of transfer RNAs. This is Probable tRNA pseudouridine synthase B from Methanococcus aeolicus (strain ATCC BAA-1280 / DSM 17508 / OCM 812 / Nankai-3).